The following is a 223-amino-acid chain: Thiamine-phosphate synthase (223 aa).

4-amino-2-methyl-5-(diphosphooxymethyl)pyrimidine is bound by residues 45 to 49 (QYREK) and Asn-77. The Mg(2+) site is built by Asp-78 and Asp-97. Thr-116 is a 4-amino-2-methyl-5-(diphosphooxymethyl)pyrimidine binding site. 142–144 (SYT) is a binding site for 2-[(2R,5Z)-2-carboxy-4-methylthiazol-5(2H)-ylidene]ethyl phosphate. Position 145 (Lys-145) interacts with 4-amino-2-methyl-5-(diphosphooxymethyl)pyrimidine. Residues Gly-173 and 193 to 194 (VT) each bind 2-[(2R,5Z)-2-carboxy-4-methylthiazol-5(2H)-ylidene]ethyl phosphate.

This sequence belongs to the thiamine-phosphate synthase family. Mg(2+) serves as cofactor.

It catalyses the reaction 2-[(2R,5Z)-2-carboxy-4-methylthiazol-5(2H)-ylidene]ethyl phosphate + 4-amino-2-methyl-5-(diphosphooxymethyl)pyrimidine + 2 H(+) = thiamine phosphate + CO2 + diphosphate. The enzyme catalyses 2-(2-carboxy-4-methylthiazol-5-yl)ethyl phosphate + 4-amino-2-methyl-5-(diphosphooxymethyl)pyrimidine + 2 H(+) = thiamine phosphate + CO2 + diphosphate. It carries out the reaction 4-methyl-5-(2-phosphooxyethyl)-thiazole + 4-amino-2-methyl-5-(diphosphooxymethyl)pyrimidine + H(+) = thiamine phosphate + diphosphate. Its pathway is cofactor biosynthesis; thiamine diphosphate biosynthesis; thiamine phosphate from 4-amino-2-methyl-5-diphosphomethylpyrimidine and 4-methyl-5-(2-phosphoethyl)-thiazole: step 1/1. Its function is as follows. Condenses 4-methyl-5-(beta-hydroxyethyl)thiazole monophosphate (THZ-P) and 2-methyl-4-amino-5-hydroxymethyl pyrimidine pyrophosphate (HMP-PP) to form thiamine monophosphate (TMP). The polypeptide is Thiamine-phosphate synthase (Dictyoglomus thermophilum (strain ATCC 35947 / DSM 3960 / H-6-12)).